The following is an 899-amino-acid chain: DNA mismatch repair protein MutS (899 aa).

The tract at residues 1–20 (MGLQKKTDPEQAQADSAASR) is disordered. Residue 631–638 (GPNMGGKS) coordinates ATP. Residues 832 to 852 (PPTPDDDEDDFGAAPSAVPAP) are disordered. The segment covering 843–852 (GAAPSAVPAP) has biased composition (low complexity).

This sequence belongs to the DNA mismatch repair MutS family.

Functionally, this protein is involved in the repair of mismatches in DNA. It is possible that it carries out the mismatch recognition step. This protein has a weak ATPase activity. The chain is DNA mismatch repair protein MutS from Cupriavidus necator (strain ATCC 17699 / DSM 428 / KCTC 22496 / NCIMB 10442 / H16 / Stanier 337) (Ralstonia eutropha).